Reading from the N-terminus, the 942-residue chain is UvrABC system protein A (942 aa).

32-39 lines the ATP pocket; it reads GLSGSGKS. A C4-type zinc finger spans residues 251-278; the sequence is CPVCGFTVPELEPRLFSFNAPFGSCPTC. ABC transporter domains lie at 308 to 589 and 609 to 937; these read WNPI…KKSI and GNGR…HYLK. An ATP-binding site is contributed by 641 to 648; the sequence is GVSGSGKS. Residues 740–766 form a C4-type zinc finger; the sequence is CEACSGDGIIKIEMHFLPDVYVPCEVC.

The protein belongs to the ABC transporter superfamily. UvrA family. Forms a heterotetramer with UvrB during the search for lesions.

The protein localises to the cytoplasm. Functionally, the UvrABC repair system catalyzes the recognition and processing of DNA lesions. UvrA is an ATPase and a DNA-binding protein. A damage recognition complex composed of 2 UvrA and 2 UvrB subunits scans DNA for abnormalities. When the presence of a lesion has been verified by UvrB, the UvrA molecules dissociate. The chain is UvrABC system protein A from Streptococcus pyogenes serotype M6 (strain ATCC BAA-946 / MGAS10394).